The primary structure comprises 399 residues: Succinate--CoA ligase [ADP-forming] subunit beta (399 aa).

An ATP-grasp domain is found at K9–E254. ATP-binding positions include K46, G53–G55, E109, A112, and E117. Residues N209 and D223 each coordinate Mg(2+). Substrate-binding positions include N274 and G331–M333.

This sequence belongs to the succinate/malate CoA ligase beta subunit family. In terms of assembly, heterotetramer of two alpha and two beta subunits. Mg(2+) serves as cofactor.

The catalysed reaction is succinate + ATP + CoA = succinyl-CoA + ADP + phosphate. The enzyme catalyses GTP + succinate + CoA = succinyl-CoA + GDP + phosphate. It functions in the pathway carbohydrate metabolism; tricarboxylic acid cycle; succinate from succinyl-CoA (ligase route): step 1/1. Succinyl-CoA synthetase functions in the citric acid cycle (TCA), coupling the hydrolysis of succinyl-CoA to the synthesis of either ATP or GTP and thus represents the only step of substrate-level phosphorylation in the TCA. The beta subunit provides nucleotide specificity of the enzyme and binds the substrate succinate, while the binding sites for coenzyme A and phosphate are found in the alpha subunit. The sequence is that of Succinate--CoA ligase [ADP-forming] subunit beta from Caulobacter vibrioides (strain NA1000 / CB15N) (Caulobacter crescentus).